The following is an 870-amino-acid chain: Leucine--tRNA ligase (870 aa).

A 'HIGH' region motif is present at residues Pro42 to His52. The 'KMSKS' region signature appears at Lys629 to Ser633. Lys632 is an ATP binding site.

This sequence belongs to the class-I aminoacyl-tRNA synthetase family.

It localises to the cytoplasm. It carries out the reaction tRNA(Leu) + L-leucine + ATP = L-leucyl-tRNA(Leu) + AMP + diphosphate. In Dechloromonas aromatica (strain RCB), this protein is Leucine--tRNA ligase.